A 411-amino-acid polypeptide reads, in one-letter code: UPF0761 membrane protein PA0951 (411 aa).

6 consecutive transmembrane segments (helical) span residues 36 to 56 (LFAV…IPAF), 92 to 112 (HLTW…LVTI), 132 to 152 (FLLY…GFAV), 174 to 194 (LLGL…YSAV), 207 to 229 (GGVF…VSLF), and 244 to 264 (IFLL…VLVC).

It belongs to the UPF0761 family.

It is found in the cell inner membrane. This is UPF0761 membrane protein PA0951 from Pseudomonas aeruginosa (strain ATCC 15692 / DSM 22644 / CIP 104116 / JCM 14847 / LMG 12228 / 1C / PRS 101 / PAO1).